A 274-amino-acid chain; its full sequence is MAASPRVSLPVGCIGAGRMAQGILEGILHKGEITPQNVMVSAPTDRNLEKLKARGCCTSHDNRSVVSNCRVVFLATKPHIIPSVLQEIYPKVTADHLIISMAAGVTLETLEKNLPPGSKVIRMMPNLPCVLQEGAIVFSRGRCAGEVEADVFESLVRTCGLCVEVPQSCIDIHTGVSGSGVAYVYTFAEALADGAVKMGMPSALARQIVAQTLLGAGKMLLQSEEHPASLRADVCTPGGTTIFGLHELEKGGLRAAVMNAVEAATTRAMDMGRK.

The protein belongs to the pyrroline-5-carboxylate reductase family. In terms of assembly, homodecamer; composed of 5 homodimers.

Its subcellular location is the cytoplasm. It carries out the reaction L-proline + NADP(+) = (S)-1-pyrroline-5-carboxylate + NADPH + 2 H(+). It catalyses the reaction L-proline + NAD(+) = (S)-1-pyrroline-5-carboxylate + NADH + 2 H(+). It participates in amino-acid biosynthesis; L-proline biosynthesis; L-proline from L-glutamate 5-semialdehyde: step 1/1. Its function is as follows. Oxidoreductase that catalyzes the last step in proline biosynthesis, which corresponds to the reduction of pyrroline-5-carboxylate (P5C) to L-proline using NAD(P)H. Proline is synthesized from either glutamate or ornithine; both are converted to P5C, and then to proline via pyrroline-5-carboxylate reductases (PYCRs). PYCR3 is exclusively linked to the biosynthesis of proline from ornithine. This chain is Pyrroline-5-carboxylate reductase 3, found in Xenopus laevis (African clawed frog).